Reading from the N-terminus, the 211-residue chain is MISRMEKMTMMMKILIMFALGMNYWSCSGFPVYDYDPSSLRDALSASVVKVNSQSLSPYLFRAFRSSLKRVEVLDENNLVMNLEFSIRETTCRKDSGEDPATCAFQRDYYVSTAVCRSTVKVSAQQVQGVHARCSWSSSTSESYSSEEMIFGDMLGSHKWRNNYLFGLISDESISEQFYDRSLGIMRRVLPPGNRRYPNHRHRARINTDFE.

An N-terminal signal peptide occupies residues 1-29 (MISRMEKMTMMMKILIMFALGMNYWSCSG). Cystine bridges form between C92–C103 and C116–C134. Residue S96 is modified to Phosphoserine. S145, S146, S170, S173, and S182 each carry phosphoserine.

The protein belongs to the SPP2 family. Post-translationally, phosphorylation sites are present in the extracellular medium. As to expression, detected in liver and plasma.

Its subcellular location is the secreted. In terms of biological role, could coordinate an aspect of bone turnover. The sequence is that of Secreted phosphoprotein 24 (SPP2) from Homo sapiens (Human).